A 426-amino-acid polypeptide reads, in one-letter code: 5-hydroxybenzimidazole synthase BzaB (426 aa).

Substrate contacts are provided by residues Met95, Tyr124, His163, 185-187, 226-229, and Glu265; these read SRG and DAIR. Residue His269 coordinates Zn(2+). Phe292 contributes to the substrate binding site. Position 333 (His333) interacts with Zn(2+). [4Fe-4S] cluster contacts are provided by Cys407, Cys410, and Cys414.

This sequence belongs to the ThiC family. 5-hydroxybenzimidazole synthase subfamily. The cofactor is [4Fe-4S] cluster.

It catalyses the reaction 5-amino-1-(5-phospho-beta-D-ribosyl)imidazole + AH2 + S-adenosyl-L-methionine = 5-hydroxybenzimidazole + 5'-deoxyadenosine + formate + L-methionine + A + NH4(+) + phosphate + 2 H(+). Its function is as follows. Together with BzaA, probably catalyzes the conversion of aminoimidazole ribotide (AIR) to 5-hydroxybenzimidazole (5-HBI) in a radical S-adenosyl-L-methionine (SAM)-dependent reaction. Is thus involved in the anaerobic biosynthesis of the benzimidazole lower axial ligand of the cobamide produced by M.thermoacetica. Requires BzaA for catalytic activity, as BzaB alone displays no activity. This Moorella thermoacetica (strain ATCC 39073 / JCM 9320) protein is 5-hydroxybenzimidazole synthase BzaB.